The sequence spans 175 residues: NADH-ubiquinone oxidoreductase chain 6 (175 aa).

Helical transmembrane passes span 1–21 (MMTY…VSFS), 25–45 (SPIY…GIVL), 47–67 (FGGS…MLVV), 88–108 (AVLA…CYIL), and 149–169 (YGTW…LVIM).

It belongs to the complex I subunit 6 family. Core subunit of respiratory chain NADH dehydrogenase (Complex I) which is composed of 45 different subunits.

It localises to the mitochondrion inner membrane. It catalyses the reaction a ubiquinone + NADH + 5 H(+)(in) = a ubiquinol + NAD(+) + 4 H(+)(out). Its function is as follows. Core subunit of the mitochondrial membrane respiratory chain NADH dehydrogenase (Complex I) which catalyzes electron transfer from NADH through the respiratory chain, using ubiquinone as an electron acceptor. Essential for the catalytic activity and assembly of complex I. The chain is NADH-ubiquinone oxidoreductase chain 6 (MT-ND6) from Felis catus (Cat).